We begin with the raw amino-acid sequence, 352 residues long: Phosphatase Herzog (352 aa).

Residues 1-102 form a prion-like domain necessary for both protein assembly and membrane targeting region; it reads MDATSIITQV…PLPDQQRYLL (102 aa). The mediates substrate recognition stretch occupies residues 103–267; it reads PQVRLTDMHR…ELIPLFEKLS (165 aa). In terms of domain architecture, FCP1 homology spans 108-266; sequence TDMHRKCMVI…RELIPLFEKL (159 aa). Disordered regions lie at residues 284–310 and 332–352; these read NNQTNQQQHPQELQQAPNQLHQQLQQQ and TMLNQQQTSPPSPQSELLQKT.

Monomer. Forms higher-order protein aggregates with amyloid-like features during gastrulation. Interacts with babo, dah, Irk1, pch2, Ras64B, sax and Src64B.

It is found in the cell membrane. It carries out the reaction O-phospho-L-seryl-[protein] + H2O = L-seryl-[protein] + phosphate. With respect to regulation, phosphatase activity requires amyloid-like aggregation on the membrane. Prion-like membrane-associated phosphatase. Phosphatase activity depends on amyloid-like assembly at the membrane. Might have a role in establishment of segment polarity in embryos. This chain is Phosphatase Herzog, found in Drosophila melanogaster (Fruit fly).